Consider the following 341-residue polypeptide: L-threonine 3-dehydrogenase (341 aa).

Cys-38 serves as a coordination point for Zn(2+). Catalysis depends on charge relay system residues Thr-40 and His-43. Zn(2+) is bound by residues His-63, Glu-64, Cys-93, Cys-96, Cys-99, and Cys-107. Residues Ile-175, Asp-195, Arg-200, 262–264 (LGI), and 286–287 (IY) contribute to the NAD(+) site.

Belongs to the zinc-containing alcohol dehydrogenase family. Homotetramer. It depends on Zn(2+) as a cofactor.

The protein localises to the cytoplasm. It carries out the reaction L-threonine + NAD(+) = (2S)-2-amino-3-oxobutanoate + NADH + H(+). Its pathway is amino-acid degradation; L-threonine degradation via oxydo-reductase pathway; glycine from L-threonine: step 1/2. Functionally, catalyzes the NAD(+)-dependent oxidation of L-threonine to 2-amino-3-ketobutyrate. The protein is L-threonine 3-dehydrogenase of Shigella boydii serotype 4 (strain Sb227).